A 290-amino-acid chain; its full sequence is Probable branched-chain-amino-acid aminotransferase (290 aa).

An N6-(pyridoxal phosphate)lysine modification is found at K155.

The protein belongs to the class-IV pyridoxal-phosphate-dependent aminotransferase family. Requires pyridoxal 5'-phosphate as cofactor.

The catalysed reaction is L-leucine + 2-oxoglutarate = 4-methyl-2-oxopentanoate + L-glutamate. It catalyses the reaction L-isoleucine + 2-oxoglutarate = (S)-3-methyl-2-oxopentanoate + L-glutamate. The enzyme catalyses L-valine + 2-oxoglutarate = 3-methyl-2-oxobutanoate + L-glutamate. The protein operates within amino-acid biosynthesis; L-isoleucine biosynthesis; L-isoleucine from 2-oxobutanoate: step 4/4. It participates in amino-acid biosynthesis; L-leucine biosynthesis; L-leucine from 3-methyl-2-oxobutanoate: step 4/4. Its pathway is amino-acid biosynthesis; L-valine biosynthesis; L-valine from pyruvate: step 4/4. Its function is as follows. Acts on leucine, isoleucine and valine. The chain is Probable branched-chain-amino-acid aminotransferase (ilvE) from Rickettsia conorii (strain ATCC VR-613 / Malish 7).